The chain runs to 510 residues: Histidine ammonia-lyase (510 aa).

The 5-imidazolinone (Ala-Gly) cross-link spans 143–145; sequence ASG. Residue S144 is modified to 2,3-didehydroalanine (Ser).

The protein belongs to the PAL/histidase family. Contains an active site 4-methylidene-imidazol-5-one (MIO), which is formed autocatalytically by cyclization and dehydration of residues Ala-Ser-Gly.

The protein localises to the cytoplasm. It catalyses the reaction L-histidine = trans-urocanate + NH4(+). The protein operates within amino-acid degradation; L-histidine degradation into L-glutamate; N-formimidoyl-L-glutamate from L-histidine: step 1/3. The sequence is that of Histidine ammonia-lyase from Shewanella pealeana (strain ATCC 700345 / ANG-SQ1).